The primary structure comprises 68 residues: U-scoloptoxin(02)-Er1a (68 aa).

The first 20 residues, 1-20 (MIVSLRCCLLLVALLITVET), serve as a signal peptide directing secretion. 3 cysteine pairs are disulfide-bonded: C30–C52, C38–C58, and C42–C60.

This sequence belongs to the invertebrate defensin family. As to expression, expressed by the venom gland.

The protein localises to the secreted. Its function is as follows. Antibacterial peptide mostly active against Gram-positive bacteria. The polypeptide is U-scoloptoxin(02)-Er1a (Ethmostigmus rubripes (Giant centipede)).